Reading from the N-terminus, the 503-residue chain is ESX-5 secretion system protein EccD5 (503 aa).

A run of 11 helical transmembrane segments spans residues 137-157 (IVAVQVGASMVATGVVLATGV), 169-189 (LTTIYTAVIGVLVLAVAMLLL), 200-220 (VADIMLMSAIMPVTVAAAAAP), 224-244 (VGSPQAVLGFGVLTVAAALAL), 250-270 (RLGIYTTIVIIGALTMLAALA), 272-292 (MVAATSAVTLLSSLLLICVVA), 359-379 (FLSGLLTGLGVMVVVCMTSLC), 382-402 (HTGQRWLPLILAGFTSGFLLL), 413-433 (SITLAGTAVIIAAAVCVRYAL), 439-459 (LAVSIVAAILVLLPAAGMAAA), and 480-500 (YLCLMPIFPLALWLMNVYAAI).

Belongs to the EccD/Snm4 family. In terms of assembly, part of the ESX-5 / type VII secretion system (T7SS), which is composed of cytosolic and membrane components. The ESX-5 membrane complex is composed of EccB5, EccC5, EccD5 and EccE5.

The protein localises to the cell inner membrane. Part of the ESX-5 specialized secretion system, which is responsible for the secretion of EsxN and a number of PE_PGRS and PPE proteins, including PPE41. This chain is ESX-5 secretion system protein EccD5, found in Mycobacterium tuberculosis (strain CDC 1551 / Oshkosh).